We begin with the raw amino-acid sequence, 581 residues long: La-related protein 7 (581 aa).

Methionine 1 carries the N-acetylmethionine modification. The segment covering 1–10 (METESGNQKN) has biased composition (polar residues). 3 disordered regions span residues 1-28 (METE…KKKR), 188-368 (NPPE…ERHK), and 410-440 (KSES…CPTQ). An HTH La-type RNA-binding domain is found at 28-122 (RSRVKQVLAD…KPLGERPKDE (95 aa)). Residues 125–203 (RTVYVELLPK…PRKPGIFPKT (79 aa)) enclose the RRM domain. The span at 219–228 (KKKKKKKGRM) shows a compositional bias: basic residues. A compositionally biased stretch (basic and acidic residues) spans 229–240 (KKEDNVQAKEEN). Residue lysine 237 forms a Glycyl lysine isopeptide (Lys-Gly) (interchain with G-Cter in SUMO2) linkage. At threonine 257 the chain carries Phosphothreonine. Residues serine 258, serine 261, serine 273, serine 298, serine 299, and serine 300 each carry the phosphoserine modification. Over residues 316 to 335 (IQKDIIKEPSEASKENRDIE) the composition is skewed to basic and acidic residues. Residue serine 337 is modified to Phosphoserine. Residue threonine 338 is modified to Phosphothreonine. Serine 351 bears the Phosphoserine mark. The span at 354 to 367 (KTKRKHKKKHKERH) shows a compositional bias: basic residues. Lysine 410 is covalently cross-linked (Glycyl lysine isopeptide (Lys-Gly) (interchain with G-Cter in SUMO2)). The region spanning 449–562 (QFVSGVIVKI…TEKLITKAEK (114 aa)) is the xRRM domain.

Belongs to the LARP7 family. In terms of assembly, core component of the 7SK RNP complex, at least composed of 7SK RNA, LARP7, MEPCE, HEXIM1 (or HEXIM2) and P-TEFb (composed of CDK9 and CCNT1/cyclin-T1). Interacts with METTL16. Interacts with RBM7; upon genotoxic stress this interaction is enhanced, triggering the release of inactive P-TEFb complex from the core, yielding to P-TEFb complex activation. Associates with box C/D small nucleolar ribonucleoprotein (snoRNP) complexes.

The protein localises to the nucleus. It localises to the nucleoplasm. Functionally, RNA-binding protein that specifically binds distinct small nuclear RNA (snRNAs) and regulates their processing and function. Specifically binds the 7SK snRNA (7SK RNA) and acts as a core component of the 7SK ribonucleoprotein (RNP) complex, thereby acting as a negative regulator of transcription elongation by RNA polymerase II. The 7SK RNP complex sequesters the positive transcription elongation factor b (P-TEFb) in a large inactive 7SK RNP complex preventing RNA polymerase II phosphorylation and subsequent transcriptional elongation. The 7SK RNP complex also promotes snRNA gene transcription by RNA polymerase II via interaction with the little elongation complex (LEC). LARP7 specifically binds to the highly conserved 3'-terminal U-rich stretch of 7SK RNA; on stimulation, remains associated with 7SK RNA, whereas P-TEFb is released from the complex. LARP7 also acts as a regulator of mRNA splicing fidelity by promoting U6 snRNA processing. Specifically binds U6 snRNAs and associates with a subset of box C/D RNP complexes: promotes U6 snRNA 2'-O-methylation by facilitating U6 snRNA loading into box C/D RNP complexes. U6 snRNA 2'-O-methylation is required for mRNA splicing fidelity. Binds U6 snRNAs with a 5'-CAGGG-3' sequence motif. U6 snRNA processing is required for spermatogenesis. The polypeptide is La-related protein 7 (Macaca fascicularis (Crab-eating macaque)).